Consider the following 1283-residue polypeptide: 5-oxoprolinase PfmaA (1283 aa).

The tract at residues 1256 to 1283 (NTPGGGAWGKPEGDADGYREEDQAGDGI) is disordered. Over residues 1266-1277 (PEGDADGYREED) the composition is skewed to basic and acidic residues.

The protein belongs to the oxoprolinase family. In terms of assembly, homodimer.

It catalyses the reaction 5-oxo-L-proline + ATP + 2 H2O = L-glutamate + ADP + phosphate + H(+). Its function is as follows. 5-oxoprolinase; part of the gene cluster that mediates the biosynthesis of dihydroxynaphthalene (DHN)-melanin, a bluish-green pigment forming a dark layer in the conidial wall that protects the conidia from UV radiations. The first step of the pathway is the production of the pentaketide 1,3,6,8-tetrahydroxynaphthalene (1,3,6,8-THN or T4HN) by the polyketide synthase PfmaE though condensation of acetyl-CoA with malonyl-CoA. T4HN is not stable and easily oxidizes into the stable form flaviolin. T4HN is also substrate of the hydroxynaphthalene reductase PfmaG to yield scytalone. The scytalone dehydratase PfmaJ then reduces scytalone to 1,3,8-THN. 1,3,8-THN is then substrate of the hydroxynaphthalene reductase PfmaI to yield vermelone. Vermelone is further converted by the multicopper oxidase PfmaD to 1,8-DHN. Finally the laccase PFICI_06862 transforms 1,8-DHN to DHN-melanin. The roles of the 5-oxoprolinase PfmaA and the proline iminopeptidase PfmaB within the cluster have not been elucidated yet. The protein is 5-oxoprolinase PfmaA of Pestalotiopsis fici (strain W106-1 / CGMCC3.15140).